Consider the following 634-residue polypeptide: Probable beta-glucosidase C (634 aa).

The signal sequence occupies residues 1–19 (MRIDCTVASLTALASGCQA). N-linked (GlcNAc...) asparagine glycans are attached at residues Asn90, Asn112, Asn219, and Asn270. Asp337 is an active-site residue. N-linked (GlcNAc...) asparagine glycosylation is found at Asn360, Asn476, Asn484, and Asn524.

Belongs to the glycosyl hydrolase 3 family.

It localises to the secreted. The catalysed reaction is Hydrolysis of terminal, non-reducing beta-D-glucosyl residues with release of beta-D-glucose.. The protein operates within glycan metabolism; cellulose degradation. Functionally, beta-glucosidases are one of a number of cellulolytic enzymes involved in the degradation of cellulosic biomass. Catalyzes the last step releasing glucose from the inhibitory cellobiose. In Aspergillus flavus (strain ATCC 200026 / FGSC A1120 / IAM 13836 / NRRL 3357 / JCM 12722 / SRRC 167), this protein is Probable beta-glucosidase C (bglC).